A 270-amino-acid polypeptide reads, in one-letter code: F-actin-capping protein subunit beta (270 aa).

Residues 245–258 (QTRSQKSTTDSQEQ) are compositionally biased toward polar residues. The interval 245–270 (QTRSQKSTTDSQEQQQKEVIKGLQNL) is disordered.

The protein belongs to the F-actin-capping protein beta subunit family. In terms of assembly, component of the F-actin capping complex, composed of a heterodimer of an alpha and a beta subunit.

The protein resides in the cytoplasm. The protein localises to the cytoskeleton. It localises to the actin patch. Its function is as follows. F-actin-capping proteins bind in a Ca(2+)-independent manner to the fast growing ends of actin filaments (barbed end) thereby blocking the exchange of subunits at these ends. Unlike other capping proteins (such as gelsolin and severin), these proteins do not sever actin filaments. This chain is F-actin-capping protein subunit beta (CAP2), found in Candida glabrata (strain ATCC 2001 / BCRC 20586 / JCM 3761 / NBRC 0622 / NRRL Y-65 / CBS 138) (Yeast).